We begin with the raw amino-acid sequence, 219 residues long: Protein GrpE (219 aa).

Disordered regions lie at residues 1 to 32 (MSTTDNTNGDDRRPGQPEWDDEENNFEHLDAT) and 59 to 87 (FDGVDASTEDPGATVGETSTLESELAERT).

It belongs to the GrpE family. In terms of assembly, homodimer.

It is found in the cytoplasm. Its function is as follows. Participates actively in the response to hyperosmotic and heat shock by preventing the aggregation of stress-denatured proteins, in association with DnaK and GrpE. It is the nucleotide exchange factor for DnaK and may function as a thermosensor. Unfolded proteins bind initially to DnaJ; upon interaction with the DnaJ-bound protein, DnaK hydrolyzes its bound ATP, resulting in the formation of a stable complex. GrpE releases ADP from DnaK; ATP binding to DnaK triggers the release of the substrate protein, thus completing the reaction cycle. Several rounds of ATP-dependent interactions between DnaJ, DnaK and GrpE are required for fully efficient folding. This is Protein GrpE from Corynebacterium diphtheriae (strain ATCC 700971 / NCTC 13129 / Biotype gravis).